We begin with the raw amino-acid sequence, 414 residues long: 2,3-bisphosphoglycerate-independent phosphoglycerate mutase (414 aa).

It belongs to the BPG-independent phosphoglycerate mutase family. A-PGAM subfamily.

The catalysed reaction is (2R)-2-phosphoglycerate = (2R)-3-phosphoglycerate. The protein operates within carbohydrate degradation; glycolysis; pyruvate from D-glyceraldehyde 3-phosphate: step 3/5. Its function is as follows. Catalyzes the interconversion of 2-phosphoglycerate and 3-phosphoglycerate. This Saccharolobus islandicus (strain L.S.2.15 / Lassen #1) (Sulfolobus islandicus) protein is 2,3-bisphosphoglycerate-independent phosphoglycerate mutase.